The following is a 55-amino-acid chain: MQILLVVRLVLLWLGGLSAAALGITETAASAHFGTRIGWGKFEQDPNIYYNETQY.

Residues 1 to 19 (MQILLVVRLVLLWLGGLSA) form the signal peptide.

This is an uncharacterized protein from Orgyia pseudotsugata multicapsid polyhedrosis virus (OpMNPV).